Here is a 206-residue protein sequence, read N- to C-terminus: Anti-sigma-W factor RsiW (206 aa).

At 1–87 the chain is on the cytoplasmic side; it reads MSCPEHIVQL…ASINRWLKAH (87 aa). Positions 30, 34, and 37 each coordinate Zn(2+). A helical membrane pass occupies residues 88–108; sequence PFLVAAALFAILMGGSFFSSW. Residues 109–206 lie on the Extracellular side of the membrane; the sequence is KNDHDFSVSS…SVFGVKESKE (98 aa).

Belongs to the zinc-associated anti-sigma factor (ZAS) superfamily. Anti-sigma-W factor family. Zn(2+) is required as a cofactor. Post-translationally, is processed by three successive proteolytic events. First, the extracellular region of RsiW is cleaved by PrsW (Site-1 cleavage) in response to cell envelope stresses. Next, it undergoes cleavage at an intramembrane site (Site-2 cleavage) mediated by RasP. This cleavage uncovers a cryptic proteolytic tag with conserved alanine residues in the transmembrane segment, that is recognized mainly by the ClpXP protease, which completely degrades the protein in the cytoplasm and leads to the induction of the sigma-W-controlled genes.

It localises to the membrane. In terms of biological role, is the anti-sigma factor for SigW. The presence of RsiW leads to the inactivation of SigW, and its proteolytic destruction to sigma-W activation. The protein is Anti-sigma-W factor RsiW (rsiW) of Bacillus licheniformis (strain ATCC 14580 / DSM 13 / JCM 2505 / CCUG 7422 / NBRC 12200 / NCIMB 9375 / NCTC 10341 / NRRL NRS-1264 / Gibson 46).